Reading from the N-terminus, the 103-residue chain is NADH-quinone oxidoreductase subunit K 2 (103 aa).

A run of 3 helical transmembrane segments spans residues 7–27 (LAWY…GFMI), 31–51 (IITI…TFVA), and 63–83 (IFVF…LGII).

Belongs to the complex I subunit 4L family. NDH-1 is composed of 14 different subunits. Subunits NuoA, H, J, K, L, M, N constitute the membrane sector of the complex.

The protein resides in the cell inner membrane. It catalyses the reaction a quinone + NADH + 5 H(+)(in) = a quinol + NAD(+) + 4 H(+)(out). In terms of biological role, NDH-1 shuttles electrons from NADH, via FMN and iron-sulfur (Fe-S) centers, to quinones in the respiratory chain. The immediate electron acceptor for the enzyme in this species is believed to be ubiquinone. Couples the redox reaction to proton translocation (for every two electrons transferred, four hydrogen ions are translocated across the cytoplasmic membrane), and thus conserves the redox energy in a proton gradient. This Koribacter versatilis (strain Ellin345) protein is NADH-quinone oxidoreductase subunit K 2.